Reading from the N-terminus, the 234-residue chain is Large ribosomal subunit protein uL1 (234 aa).

This sequence belongs to the universal ribosomal protein uL1 family. Part of the 50S ribosomal subunit.

In terms of biological role, binds directly to 23S rRNA. The L1 stalk is quite mobile in the ribosome, and is involved in E site tRNA release. Its function is as follows. Protein L1 is also a translational repressor protein, it controls the translation of the L11 operon by binding to its mRNA. This chain is Large ribosomal subunit protein uL1, found in Klebsiella pneumoniae subsp. pneumoniae (strain ATCC 700721 / MGH 78578).